We begin with the raw amino-acid sequence, 504 residues long: Maturase K (504 aa).

This sequence belongs to the intron maturase 2 family. MatK subfamily.

The protein localises to the plastid. It is found in the chloroplast. In terms of biological role, usually encoded in the trnK tRNA gene intron. Probably assists in splicing its own and other chloroplast group II introns. The chain is Maturase K from Nepenthes alata (Winged pitcher plant).